Reading from the N-terminus, the 257-residue chain is Transmembrane protein C257L (257 aa).

Transmembrane regions (helical) follow at residues 123 to 143 and 163 to 183; these read LELLGYSPTSLIGGDLMFTAL and MMIFFLIILLCIILGIFYVLV.

It belongs to the asfivirus C257R family.

The protein resides in the host membrane. It localises to the virion. This Ornithodoros (relapsing fever ticks) protein is Transmembrane protein C257L.